Reading from the N-terminus, the 37-residue chain is Bactericidin B-3 (37 aa).

Glycine amide is present on Gly37.

It belongs to the cecropin family.

It is found in the secreted. Its function is as follows. Cecropins have lytic and antibacterial activity against several Gram-positive and Gram-negative bacteria. This chain is Bactericidin B-3, found in Manduca sexta (Tobacco hawkmoth).